Here is a 75-residue protein sequence, read N- to C-terminus: Large ribosomal subunit protein eL14 (75 aa).

Belongs to the eukaryotic ribosomal protein eL14 family.

In Methanothermobacter thermautotrophicus (strain ATCC 29096 / DSM 1053 / JCM 10044 / NBRC 100330 / Delta H) (Methanobacterium thermoautotrophicum), this protein is Large ribosomal subunit protein eL14.